The following is a 336-amino-acid chain: Dihydroorotate dehydrogenase (quinone) (336 aa).

FMN is bound by residues 62 to 66 (AGLDK) and Thr86. Lys66 is a binding site for substrate. 111-115 (NRMGF) lines the substrate pocket. 2 residues coordinate FMN: Asn139 and Asn172. Position 172 (Asn172) interacts with substrate. Residue Ser175 is the Nucleophile of the active site. Asn177 contacts substrate. Lys217 and Thr245 together coordinate FMN. 246 to 247 (NT) is a substrate binding site. Residues Gly268, Gly297, and 318–319 (YS) contribute to the FMN site.

Belongs to the dihydroorotate dehydrogenase family. Type 2 subfamily. In terms of assembly, monomer. The cofactor is FMN.

The protein localises to the cell membrane. It catalyses the reaction (S)-dihydroorotate + a quinone = orotate + a quinol. The protein operates within pyrimidine metabolism; UMP biosynthesis via de novo pathway; orotate from (S)-dihydroorotate (quinone route): step 1/1. In terms of biological role, catalyzes the conversion of dihydroorotate to orotate with quinone as electron acceptor. This chain is Dihydroorotate dehydrogenase (quinone), found in Sodalis glossinidius (strain morsitans).